We begin with the raw amino-acid sequence, 592 residues long: Frizzled-9 (592 aa).

An N-terminal signal peptide occupies residues 1 to 23; the sequence is MAVPPLLRGALLLWQLLATGGAA. Topologically, residues 24–230 are extracellular; that stretch reads LEIGRFDPER…EVFWSRRDKD (207 aa). Positions 35 to 156 constitute an FZ domain; the sequence is RGPAPCQAME…NDPHALCMEA (122 aa). 5 disulfides stabilise this stretch: Cys-40–Cys-101, Cys-48–Cys-94, Cys-85–Cys-123, Cys-112–Cys-153, and Cys-116–Cys-140. Asn-54 is a glycosylation site (N-linked (GlcNAc...) asparagine). A required for Wnt-activated receptor activity region spans residues 59–173; it reads PNLLGHTSQG…PTEPHKGLGM (115 aa). N-linked (GlcNAc...) asparagine glycosylation is present at Asn-159. A helical membrane pass occupies residues 231–251; the sequence is FALVWMAVWSALCFFSTAFTV. Topologically, residues 252-267 are cytoplasmic; it reads FTFLLEPHRFQYPERP. A helical transmembrane segment spans residues 268–288; it reads IIFLSMCYNVYSLAFLIRAVA. Topologically, residues 289–316 are extracellular; that stretch reads GAQSVACDQEAGALYVIQEGLENTGCTL. A helical transmembrane segment spans residues 317–337; sequence VFLLLYYFGMASSLWWVVLTL. Residues 338–356 lie on the Cytoplasmic side of the membrane; that stretch reads TWFLAAGKKWGHEAIEAHG. A helical membrane pass occupies residues 357 to 377; that stretch reads SYFHMAAWGLPALKTIVVLTL. Over 378 to 401 the chain is Extracellular; sequence RKVAGDELTGLCYVASMDPAALTG. The helical transmembrane segment at 402-422 threads the bilayer; it reads FVLVPLSCYLVLGTSFLLTGF. Residues 423-448 are Cytoplasmic-facing; it reads VALFHIRKIMKTGGTNTEKLEKLMVK. The chain crosses the membrane as a helical span at residues 449–469; the sequence is IGVFSILYTVPATCVIVCYVY. Topologically, residues 470-509 are extracellular; the sequence is ERLNMDFWRLRATEQPCTAATVPGGRRDCSLPGGSVPTVA. A helical membrane pass occupies residues 510 to 530; the sequence is VFMLKIFMSLVVGITSGVWVW. Residues 531–592 are Cytoplasmic-facing; that stretch reads SSKTFQTWQS…DPSLENPTHL (62 aa). The Lys-Thr-X-X-X-Trp motif, mediates interaction with the PDZ domain of Dvl family members motif lies at 533-538; it reads KTFQTW. The required for CTNNB1 accumulation and TCF transcription factor activity stretch occupies residues 555 to 592; the sequence is ACRTPGGYGRGTHCHYKAPTVVLHMTKTDPSLENPTHL.

This sequence belongs to the G-protein coupled receptor Fz/Smo family. Ubiquitinated by ZNRF3, leading to its degradation by the proteasome. As to expression, in the embryo, found in the neural tube, trunk skeletal muscle precursors (myotomes), limb skeletal anlagen, craniofacial regions and nephric ducts. In the adult, expression is abundant in heart, brain, testis and skeletal muscle. In the testis, expressed in all spermatogenic cell types. Lower levels in adult lung, liver and kidney. Barely detectable in spleen. Expressed also in chondrocytes.

The protein localises to the cell membrane. In terms of biological role, receptor for WNT2 that is coupled to the beta-catenin canonical signaling pathway, which leads to the activation of disheveled proteins, inhibition of GSK-3 kinase, nuclear accumulation of beta-catenin and activation of Wnt target genes. Plays a role in neuromuscular junction (NMJ) assembly by negatively regulating the clustering of acetylcholine receptors (AChR) through the beta-catenin canonical signaling pathway. May play a role in neural progenitor cells (NPCs) viability through the beta-catenin canonical signaling pathway by negatively regulating cell cycle arrest leading to inhibition of neuron apoptotic process. During hippocampal development, regulates neuroblast proliferation and apoptotic cell death. Controls bone formation through non canonical Wnt signaling mediated via ISG15. Positively regulates bone regeneration through non canonical Wnt signaling. This chain is Frizzled-9 (Fzd9), found in Mus musculus (Mouse).